The following is a 330-amino-acid chain: Major ferric iron-binding protein (330 aa).

Residues 1-22 form the signal peptide; sequence MKTSIRYALLAAALTAATPALA. Fe cation-binding residues include His31, Glu79, Tyr217, and Tyr218.

This sequence belongs to the bacterial solute-binding protein 1 family.

The protein resides in the periplasm. This protein may be a central component in the iron-acquisition system. The sequence is that of Major ferric iron-binding protein (fbp) from Neisseria gonorrhoeae.